The chain runs to 309 residues: GDP-6-deoxy-D-mannose reductase (309 aa).

NADP(+) is bound by residues 11–12 (FV), Arg32, 47–48 (DI), and 71–73 (AKS). 114-115 (SS) contributes to the substrate binding site. Position 140 (Tyr140) interacts with NADP(+). Residues Asn169, Asp183, Arg209, and 269–272 (RPSE) contribute to the substrate site.

Belongs to the NAD(P)-dependent epimerase/dehydratase family. GDP-6-deoxy-D-mannose reductase subfamily.

It carries out the reaction GDP-alpha-D-rhamnose + NAD(+) = GDP-4-dehydro-alpha-D-rhamnose + NADH + H(+). The enzyme catalyses GDP-alpha-D-rhamnose + NADP(+) = GDP-4-dehydro-alpha-D-rhamnose + NADPH + H(+). In terms of biological role, reductase that catalyzes the conversion of GDP-6-deoxy-D-mannose to GDP-4-dehydro-6-deoxy-D-mannose (GDP-D-rhamnose). In Aneurinibacillus thermoaerophilus, this protein is GDP-6-deoxy-D-mannose reductase (rmd).